A 352-amino-acid polypeptide reads, in one-letter code: Ion-translocating oxidoreductase complex subunit D (352 aa).

A run of 5 helical transmembrane segments spans residues 20-40, 42-62, 78-109, 123-143, and 148-168; these read IMLL…RFFG, GTLV…ALVL, ALLT…VIIA, PAMI…TSWL, and IAVN…GHTA. Thr187 carries the post-translational modification FMN phosphoryl threonine. The next 4 membrane-spanning stretches (helical) occupy residues 214–234, 242–262, 267–287, and 301–318; these read ILAG…GVWL, WHIP…GWLF, LAAP…FFIL, and LMFG…RSFG.

The protein belongs to the NqrB/RnfD family. The complex is composed of six subunits: RsxA, RsxB, RsxC, RsxD, RsxE and RsxG. Requires FMN as cofactor.

It is found in the cell inner membrane. Part of a membrane-bound complex that couples electron transfer with translocation of ions across the membrane. Required to maintain the reduced state of SoxR. This Shigella flexneri protein is Ion-translocating oxidoreductase complex subunit D.